A 424-amino-acid chain; its full sequence is GTPase Obg (424 aa).

Residues 1–160 (MFDRVEINIK…YDLILELKLI (160 aa)) form the Obg domain. Residues 161–328 (ADVAIIGYPN…LLAKVAEKLD (168 aa)) enclose the OBG-type G domain. GTP contacts are provided by residues 167-174 (GYPNVGKS), 192-196 (FTTLS), 213-216 (EVPG), 280-283 (NKID), and 309-311 (SAL). Mg(2+) is bound by residues serine 174 and threonine 194. Residues 349-424 (PAPKGKMGFR…IITGRMEWYL (76 aa)) enclose the OCT domain.

This sequence belongs to the TRAFAC class OBG-HflX-like GTPase superfamily. OBG GTPase family. In terms of assembly, monomer. Requires Mg(2+) as cofactor.

The protein localises to the cytoplasm. In terms of biological role, an essential GTPase which binds GTP, GDP and possibly (p)ppGpp with moderate affinity, with high nucleotide exchange rates and a fairly low GTP hydrolysis rate. Plays a role in control of the cell cycle, stress response, ribosome biogenesis and in those bacteria that undergo differentiation, in morphogenesis control. This Dehalococcoides mccartyi (strain ATCC BAA-2100 / JCM 16839 / KCTC 5957 / BAV1) protein is GTPase Obg.